We begin with the raw amino-acid sequence, 279 residues long: UTP--glucose-1-phosphate uridylyltransferase (279 aa).

It belongs to the UDPGP type 2 family.

It carries out the reaction alpha-D-glucose 1-phosphate + UTP + H(+) = UDP-alpha-D-glucose + diphosphate. May play a role in stationary phase survival. The polypeptide is UTP--glucose-1-phosphate uridylyltransferase (galU) (Pseudomonas aeruginosa (strain ATCC 15692 / DSM 22644 / CIP 104116 / JCM 14847 / LMG 12228 / 1C / PRS 101 / PAO1)).